Reading from the N-terminus, the 500-residue chain is Keratin, type II cuticular Hb1 (500 aa).

The segment at 1–106 (MTCGSGFRGR…PNAQCVKQEE (106 aa)) is head. The 312-residue stretch at 106–417 (EKEQIKCLNN…RLLEGEEQRL (312 aa)) folds into the IF rod domain. A coil 1A region spans residues 107-141 (KEQIKCLNNRFAAFIDKVRFLEQQNKLLETKLQFY). The segment at 142-151 (QNRQCCESNL) is linker 1. Positions 152 to 252 (EPLFNGYIET…YEEEIRVLQA (101 aa)) are coil 1B. Lysine 212 participates in a covalent cross-link: Glycyl lysine isopeptide (Lys-Gly) (interchain with G-Cter in SUMO1). A linker 12 region spans residues 253-269 (HISDTSVIVKMDNSRDL). Residues 270–413 (NMDNIVAEIK…ATYRRLLEGE (144 aa)) are coil 2. The segment at 414–500 (EQRLCEGVGS…GSCASVCRKC (87 aa)) is tail.

This sequence belongs to the intermediate filament family. As to quaternary structure, heterotetramer of two type I and two type II keratins.

The sequence is that of Keratin, type II cuticular Hb1 from Bos taurus (Bovine).